A 265-amino-acid polypeptide reads, in one-letter code: 5'-nucleotidase SurE (265 aa).

A divalent metal cation-binding residues include Asp8, Asp9, Ser40, and Asn98.

This sequence belongs to the SurE nucleotidase family. A divalent metal cation is required as a cofactor.

The protein localises to the cytoplasm. The enzyme catalyses a ribonucleoside 5'-phosphate + H2O = a ribonucleoside + phosphate. In terms of biological role, nucleotidase that shows phosphatase activity on nucleoside 5'-monophosphates. The polypeptide is 5'-nucleotidase SurE (Trichormus variabilis (strain ATCC 29413 / PCC 7937) (Anabaena variabilis)).